Here is a 1272-residue protein sequence, read N- to C-terminus: RING finger protein PFE0100w (1272 aa).

A disordered region spans residues 216 to 260 (INKINDVSNNDPKKDNNEKNTSSNNITHNNYNDISNNNNNNNNIN). Low complexity predominate over residues 234-260 (KNTSSNNITHNNYNDISNNNNNNNNIN). The stretch at 608 to 752 (YIQTINYLET…GYKFIKYYPQ (145 aa)) is one CHCR repeat. A helical membrane pass occupies residues 771–791 (IFIPLFLDNIDFLFMFIVKFL). Disordered regions lie at residues 842 to 862 (NQNHNGIPSDSHNLSDDNNSQ) and 908 to 970 (ENQT…IINK). Composition is skewed to low complexity over residues 850 to 861 (SDSHNLSDDNNS) and 909 to 956 (NQTN…IQTN). Residues 957–967 (KQKGNSTTNKI) are compositionally biased toward polar residues. Residues 1146–1182 (MNDMNKNINDKCIEIEKDKKELEKIKKKQLKKKYNFY) adopt a coiled-coil conformation. Residues 1189-1224 (CSICKEILSVPMIHFLCKHSYHSYCLKDNNVCILCH) form an RING-type; atypical zinc finger.

It localises to the membrane. The sequence is that of RING finger protein PFE0100w from Plasmodium falciparum (isolate 3D7).